The sequence spans 204 residues: Somatotropin (204 aa).

The signal sequence occupies residues 1–17 (MDRVVLLLSVLSLGVSS). Q18 carries the post-translational modification Pyrrolidone carboxylic acid. H36 contributes to the Zn(2+) binding site. C69 and C177 are disulfide-bonded. A Zn(2+)-binding site is contributed by E186. An intrachain disulfide couples C194 to C202.

The protein belongs to the somatotropin/prolactin family.

It localises to the secreted. Its function is as follows. Growth hormone plays an important role in growth control and is involved in the regulation of several anabolic processes. Implicated as an osmoregulatory substance important for seawater adaptation. In Lates calcarifer (Barramundi), this protein is Somatotropin (gh).